Here is a 388-residue protein sequence, read N- to C-terminus: Processive diacylglycerol beta-glucosyltransferase (388 aa).

It belongs to the glycosyltransferase 28 family. UgtP subfamily.

It is found in the cell membrane. It catalyses the reaction a 1,2-diacyl-3-O-(beta-D-glucopyranosyl)-sn-glycerol + UDP-alpha-D-glucose = a 1,2-diacyl-3-O-(beta-D-Glc-(1-&gt;6)-beta-D-Glc)-sn-glycerol + UDP + H(+). The enzyme catalyses a 1,2-diacyl-3-O-(beta-D-Glc-(1-&gt;6)-beta-D-Glc)-sn-glycerol + UDP-alpha-D-glucose = a 1,2-diacyl-3-O-(beta-D-Glc-(1-&gt;6)-beta-D-Glc-(1-&gt;6)-beta-D-Glc)-sn-glycerol + UDP + H(+). The catalysed reaction is a 1,2-diacyl-sn-glycerol + UDP-alpha-D-glucose = a 1,2-diacyl-3-O-(beta-D-glucopyranosyl)-sn-glycerol + UDP + H(+). The protein operates within glycolipid metabolism; diglucosyl-diacylglycerol biosynthesis. In terms of biological role, processive glucosyltransferase involved in the biosynthesis of both the bilayer- and non-bilayer-forming membrane glucolipids. Is able to successively transfer up to three glucosyl residues to diacylglycerol (DAG), thereby catalyzing the formation of beta-monoglucosyl-DAG (3-O-(beta-D-glucopyranosyl)-1,2-diacyl-sn-glycerol), beta-diglucosyl-DAG (3-O-(beta-D-glucopyranosyl-beta-(1-&gt;6)-D-glucopyranosyl)-1,2-diacyl-sn-glycerol) and beta-triglucosyl-DAG (3-O-(beta-D-glucopyranosyl-beta-(1-&gt;6)-D-glucopyranosyl-beta-(1-&gt;6)-D-glucopyranosyl)-1,2-diacyl-sn-glycerol). Beta-diglucosyl-DAG is the predominant glycolipid found in Bacillales and is also used as a membrane anchor for lipoteichoic acid (LTA). The polypeptide is Processive diacylglycerol beta-glucosyltransferase (Bacillus mycoides (strain KBAB4) (Bacillus weihenstephanensis)).